Here is a 209-residue protein sequence, read N- to C-terminus: Large ribosomal subunit protein uL3 (209 aa).

The tract at residues 124–156 is disordered; that stretch reads KRHNFSGGQRTHGQSDRQRAPGSVGGSSDPSRV.

It belongs to the universal ribosomal protein uL3 family. In terms of assembly, part of the 50S ribosomal subunit. Forms a cluster with proteins L14 and L19.

Functionally, one of the primary rRNA binding proteins, it binds directly near the 3'-end of the 23S rRNA, where it nucleates assembly of the 50S subunit. The polypeptide is Large ribosomal subunit protein uL3 (Pelodictyon phaeoclathratiforme (strain DSM 5477 / BU-1)).